A 237-amino-acid polypeptide reads, in one-letter code: MNNLIKGISNVTLRCVSQTSATSTSLFYIPSITRCLTKKCYGNKSTTILNSRINNNNNVNIRQQSTTAASTNIFQQALKETKQEQGEEKVKVEDNKIVRVSLQKLGYSEWKLMALFKALSGLSLREAMAQLSFTEHSPSKKLRGLIKHAAHVAENIKGMDPERLIISQIWAGRSFYKRSIMWKGRGQGSTIRKPFCHVSVEIKESEFKDGEKKVGKFGKTNKTFSKYDGNFDHTKEY.

The protein belongs to the universal ribosomal protein uL22 family.

The protein resides in the mitochondrion. The protein is Large ribosomal subunit protein uL22m (mrpl22) of Dictyostelium discoideum (Social amoeba).